Here is a 273-residue protein sequence, read N- to C-terminus: Large ribosomal subunit protein uL2 (273 aa).

Disordered regions lie at residues 34 to 54 and 223 to 273; these read LEKK…TRHI and VAMN…RRRK.

The protein belongs to the universal ribosomal protein uL2 family. As to quaternary structure, part of the 50S ribosomal subunit. Forms a bridge to the 30S subunit in the 70S ribosome.

Functionally, one of the primary rRNA binding proteins. Required for association of the 30S and 50S subunits to form the 70S ribosome, for tRNA binding and peptide bond formation. It has been suggested to have peptidyltransferase activity; this is somewhat controversial. Makes several contacts with the 16S rRNA in the 70S ribosome. In Pseudomonas aeruginosa (strain LESB58), this protein is Large ribosomal subunit protein uL2.